A 362-amino-acid polypeptide reads, in one-letter code: Cobalt-precorrin-5B C(1)-methyltransferase (362 aa).

Belongs to the CbiD family.

The enzyme catalyses Co-precorrin-5B + S-adenosyl-L-methionine = Co-precorrin-6A + S-adenosyl-L-homocysteine. Its pathway is cofactor biosynthesis; adenosylcobalamin biosynthesis; cob(II)yrinate a,c-diamide from sirohydrochlorin (anaerobic route): step 6/10. In terms of biological role, catalyzes the methylation of C-1 in cobalt-precorrin-5B to form cobalt-precorrin-6A. The chain is Cobalt-precorrin-5B C(1)-methyltransferase from Burkholderia lata (strain ATCC 17760 / DSM 23089 / LMG 22485 / NCIMB 9086 / R18194 / 383).